Consider the following 159-residue polypeptide: NADH-quinone oxidoreductase subunit B (159 aa).

4 residues coordinate [4Fe-4S] cluster: Cys32, Cys33, Cys97, and Cys126.

It belongs to the complex I 20 kDa subunit family. In terms of assembly, NDH-1 is composed of 14 different subunits. Subunits NuoB, C, D, E, F, and G constitute the peripheral sector of the complex. It depends on [4Fe-4S] cluster as a cofactor.

The protein resides in the cell inner membrane. The enzyme catalyses a quinone + NADH + 5 H(+)(in) = a quinol + NAD(+) + 4 H(+)(out). Functionally, NDH-1 shuttles electrons from NADH, via FMN and iron-sulfur (Fe-S) centers, to quinones in the respiratory chain. The immediate electron acceptor for the enzyme in this species is believed to be ubiquinone. Couples the redox reaction to proton translocation (for every two electrons transferred, four hydrogen ions are translocated across the cytoplasmic membrane), and thus conserves the redox energy in a proton gradient. This Helicobacter pylori (strain HPAG1) protein is NADH-quinone oxidoreductase subunit B.